The sequence spans 726 residues: Catalase-peroxidase (726 aa).

Residues 1–25 are disordered; the sequence is MDAKTDDSAGKCPFTGGGRRGHRNR. A cross-link (tryptophyl-tyrosyl-methioninium (Trp-Tyr) (with M-244)) is located at residues 96-218; sequence WHSAGTYRIT…LAAVQMGLIY (123 aa). His97 serves as the catalytic Proton acceptor. The tryptophyl-tyrosyl-methioninium (Tyr-Met) (with W-96) cross-link spans 218–244; the sequence is YVNPEGPNGNPDPVAAAKDIRETFYRM. His259 lines the heme b pocket.

The protein belongs to the peroxidase family. Peroxidase/catalase subfamily. Homodimer or homotetramer. It depends on heme b as a cofactor. Post-translationally, formation of the three residue Trp-Tyr-Met cross-link is important for the catalase, but not the peroxidase activity of the enzyme.

The catalysed reaction is H2O2 + AH2 = A + 2 H2O. The enzyme catalyses 2 H2O2 = O2 + 2 H2O. Bifunctional enzyme with both catalase and broad-spectrum peroxidase activity. This is Catalase-peroxidase from Chelativorans sp. (strain BNC1).